Reading from the N-terminus, the 251-residue chain is Appressoria-specific virulence factor GAS1 (251 aa).

Positions 1–21 are cleaved as a signal peptide; the sequence is MSLKSLIAATILAAPLVAGHG. Residues 40–76 form a disordered region; it reads VTSTPRDGTRRDPFQQDSTRFKGQQADTFGETVGGGQ. Residues 54–66 are compositionally biased toward polar residues; it reads QQDSTRFKGQQAD.

It is found in the cytoplasm. Appressoria-specific virulence factor required for appressorial penetration in host and lesion development. This is Appressoria-specific virulence factor GAS1 from Pyricularia oryzae (strain 70-15 / ATCC MYA-4617 / FGSC 8958) (Rice blast fungus).